Here is a 406-residue protein sequence, read N- to C-terminus: Arginine deiminase (406 aa).

Catalysis depends on Cys396, which acts as the Amidino-cysteine intermediate.

This sequence belongs to the arginine deiminase family.

Its subcellular location is the cytoplasm. It carries out the reaction L-arginine + H2O = L-citrulline + NH4(+). It participates in amino-acid degradation; L-arginine degradation via ADI pathway; carbamoyl phosphate from L-arginine: step 1/2. This Aliivibrio salmonicida (strain LFI1238) (Vibrio salmonicida (strain LFI1238)) protein is Arginine deiminase.